A 209-amino-acid polypeptide reads, in one-letter code: UPF0502 protein mll4256 (209 aa).

Belongs to the UPF0502 family.

This Mesorhizobium japonicum (strain LMG 29417 / CECT 9101 / MAFF 303099) (Mesorhizobium loti (strain MAFF 303099)) protein is UPF0502 protein mll4256.